The following is a 101-amino-acid chain: Small ribosomal subunit protein uS10 (101 aa).

The protein belongs to the universal ribosomal protein uS10 family. Part of the 30S ribosomal subunit.

Involved in the binding of tRNA to the ribosomes. This Amoebophilus asiaticus (strain 5a2) protein is Small ribosomal subunit protein uS10.